The primary structure comprises 219 residues: 7-cyano-7-deazaguanine synthase (219 aa).

10 to 20 serves as a coordination point for ATP; that stretch reads FSGGQDSTTCL. Zn(2+) is bound by residues Cys188, Cys196, Cys199, and Cys202.

It belongs to the QueC family. Zn(2+) is required as a cofactor.

The catalysed reaction is 7-carboxy-7-deazaguanine + NH4(+) + ATP = 7-cyano-7-deazaguanine + ADP + phosphate + H2O + H(+). It functions in the pathway purine metabolism; 7-cyano-7-deazaguanine biosynthesis. Catalyzes the ATP-dependent conversion of 7-carboxy-7-deazaguanine (CDG) to 7-cyano-7-deazaguanine (preQ(0)). The sequence is that of 7-cyano-7-deazaguanine synthase from Neisseria gonorrhoeae (strain NCCP11945).